The following is a 490-amino-acid chain: Aspartyl/glutamyl-tRNA(Asn/Gln) amidotransferase subunit B (490 aa).

The protein belongs to the GatB/GatE family. GatB subfamily. In terms of assembly, heterotrimer of A, B and C subunits.

The catalysed reaction is L-glutamyl-tRNA(Gln) + L-glutamine + ATP + H2O = L-glutaminyl-tRNA(Gln) + L-glutamate + ADP + phosphate + H(+). It catalyses the reaction L-aspartyl-tRNA(Asn) + L-glutamine + ATP + H2O = L-asparaginyl-tRNA(Asn) + L-glutamate + ADP + phosphate + 2 H(+). Allows the formation of correctly charged Asn-tRNA(Asn) or Gln-tRNA(Gln) through the transamidation of misacylated Asp-tRNA(Asn) or Glu-tRNA(Gln) in organisms which lack either or both of asparaginyl-tRNA or glutaminyl-tRNA synthetases. The reaction takes place in the presence of glutamine and ATP through an activated phospho-Asp-tRNA(Asn) or phospho-Glu-tRNA(Gln). The protein is Aspartyl/glutamyl-tRNA(Asn/Gln) amidotransferase subunit B of Methylorubrum extorquens (strain CM4 / NCIMB 13688) (Methylobacterium extorquens).